The primary structure comprises 343 residues: Methylthioribose-1-phosphate isomerase (343 aa).

Residues 44–46 (RGA), Arg85, and Gln192 each bind substrate. Asp233 functions as the Proton donor in the catalytic mechanism. 243 to 244 (NK) is a substrate binding site.

Belongs to the eIF-2B alpha/beta/delta subunits family. MtnA subfamily.

It catalyses the reaction 5-(methylsulfanyl)-alpha-D-ribose 1-phosphate = 5-(methylsulfanyl)-D-ribulose 1-phosphate. Its pathway is amino-acid biosynthesis; L-methionine biosynthesis via salvage pathway; L-methionine from S-methyl-5-thio-alpha-D-ribose 1-phosphate: step 1/6. In terms of biological role, catalyzes the interconversion of methylthioribose-1-phosphate (MTR-1-P) into methylthioribulose-1-phosphate (MTRu-1-P). The sequence is that of Methylthioribose-1-phosphate isomerase from Carboxydothermus hydrogenoformans (strain ATCC BAA-161 / DSM 6008 / Z-2901).